Here is a 197-residue protein sequence, read N- to C-terminus: 7-methyl-GTP pyrophosphatase (197 aa).

Asp-69 functions as the Proton acceptor in the catalytic mechanism.

This sequence belongs to the Maf family. YceF subfamily. It depends on a divalent metal cation as a cofactor.

It localises to the cytoplasm. It catalyses the reaction N(7)-methyl-GTP + H2O = N(7)-methyl-GMP + diphosphate + H(+). Nucleoside triphosphate pyrophosphatase that hydrolyzes 7-methyl-GTP (m(7)GTP). May have a dual role in cell division arrest and in preventing the incorporation of modified nucleotides into cellular nucleic acids. The sequence is that of 7-methyl-GTP pyrophosphatase from Pectobacterium atrosepticum (strain SCRI 1043 / ATCC BAA-672) (Erwinia carotovora subsp. atroseptica).